Here is a 277-residue protein sequence, read N- to C-terminus: 3-methyl-2-oxobutanoate hydroxymethyltransferase (277 aa).

Positions 43 and 82 each coordinate Mg(2+). 3-methyl-2-oxobutanoate-binding positions include 43 to 44 (DS), aspartate 82, and lysine 112. Glutamate 114 is a binding site for Mg(2+). Residue glutamate 181 is the Proton acceptor of the active site.

The protein belongs to the PanB family. As to quaternary structure, homodecamer; pentamer of dimers. It depends on Mg(2+) as a cofactor.

Its subcellular location is the cytoplasm. The catalysed reaction is 3-methyl-2-oxobutanoate + (6R)-5,10-methylene-5,6,7,8-tetrahydrofolate + H2O = 2-dehydropantoate + (6S)-5,6,7,8-tetrahydrofolate. The protein operates within cofactor biosynthesis; (R)-pantothenate biosynthesis; (R)-pantoate from 3-methyl-2-oxobutanoate: step 1/2. Its function is as follows. Catalyzes the reversible reaction in which hydroxymethyl group from 5,10-methylenetetrahydrofolate is transferred onto alpha-ketoisovalerate to form ketopantoate. This chain is 3-methyl-2-oxobutanoate hydroxymethyltransferase, found in Bacillus licheniformis (strain ATCC 14580 / DSM 13 / JCM 2505 / CCUG 7422 / NBRC 12200 / NCIMB 9375 / NCTC 10341 / NRRL NRS-1264 / Gibson 46).